Here is a 61-residue protein sequence, read N- to C-terminus: Probable tautomerase lmo2564 (61 aa).

The Proton acceptor; via imino nitrogen role is filled by proline 2.

It belongs to the 4-oxalocrotonate tautomerase family.

The chain is Probable tautomerase lmo2564 from Listeria monocytogenes serovar 1/2a (strain ATCC BAA-679 / EGD-e).